The chain runs to 146 residues: DNA-directed RNA polymerases II, IV and V subunit 8B (146 aa).

This sequence belongs to the eukaryotic RPB8 RNA polymerase subunit family. In terms of assembly, component of the RNA polymerase II, IV and V complexes. Associates with the mediator complex.

It localises to the nucleus. Its function is as follows. DNA-dependent RNA polymerase catalyzes the transcription of DNA into RNA using the four ribonucleoside triphosphates as substrates. Component of RNA polymerase II which synthesizes mRNA precursors and many functional non-coding RNAs. Pol II is the central component of the basal RNA polymerase II transcription machinery. It is composed of mobile elements that move relative to each other. Component of RNA polymerases IV and V which mediate short-interfering RNAs (siRNA) accumulation and subsequent RNA-directed DNA methylation-dependent (RdDM) transcriptional gene silencing (TGS) of endogenous repeated sequences, including transposable elements. The sequence is that of DNA-directed RNA polymerases II, IV and V subunit 8B (NRPB8B) from Arabidopsis thaliana (Mouse-ear cress).